A 199-amino-acid chain; its full sequence is Recombination protein RecR (199 aa).

A C4-type zinc finger spans residues 57-72 (CPICGNITEKEVCDIC). One can recognise a Toprim domain in the interval 80-176 (TTIMVVEQPK…KVTRLAAGLS (97 aa)).

This sequence belongs to the RecR family.

May play a role in DNA repair. It seems to be involved in an RecBC-independent recombinational process of DNA repair. It may act with RecF and RecO. The sequence is that of Recombination protein RecR from Lactobacillus helveticus (strain DPC 4571).